Here is a 63-residue protein sequence, read N- to C-terminus: MKAQDLRQKSVEELKTELLGLLRAQFNLRIQKSTGQLNQTHTIKQVRRDIARVKTVLNEKAGA.

Belongs to the universal ribosomal protein uL29 family.

The polypeptide is Large ribosomal subunit protein uL29 (Tolumonas auensis (strain DSM 9187 / NBRC 110442 / TA 4)).